We begin with the raw amino-acid sequence, 177 residues long: Thymidine kinase (177 aa).

11–18 (GPMFSGKS) provides a ligand contact to ATP. Glu-83 functions as the Proton acceptor in the catalytic mechanism. Phe-113 contributes to the substrate binding site. Residues Cys-138 and Cys-141 each contribute to the Zn(2+) site. 157 to 161 (IEIIG) is a substrate binding site. Cys-170 and Cys-173 together coordinate Zn(2+).

It belongs to the thymidine kinase family. Homotetramer. Two molecules of substrate bind to each enzyme tetramer.

It carries out the reaction thymidine + ATP = dTMP + ADP + H(+). Functionally, phosphorylates thymidine and thymidine analogs, such as azidothymidine (AZT). Part of the salvage pathway for pyrimidine deoxyribonucleotide synthesis. This chain is Thymidine kinase (OPG101), found in Variola virus.